We begin with the raw amino-acid sequence, 398 residues long: LL-diaminopimelate aminotransferase (398 aa).

Positions 14 and 41 each coordinate substrate. Pyridoxal 5'-phosphate contacts are provided by residues tyrosine 71, 104 to 105, tyrosine 128, asparagine 174, tyrosine 205, and 233 to 235; these read AK and SFS. Substrate is bound by residues lysine 105, tyrosine 128, and asparagine 174. N6-(pyridoxal phosphate)lysine is present on lysine 236. Pyridoxal 5'-phosphate-binding residues include arginine 244 and asparagine 275. Residues asparagine 275 and arginine 368 each contribute to the substrate site.

The protein belongs to the class-I pyridoxal-phosphate-dependent aminotransferase family. LL-diaminopimelate aminotransferase subfamily. As to quaternary structure, homodimer. Pyridoxal 5'-phosphate is required as a cofactor.

It carries out the reaction (2S,6S)-2,6-diaminopimelate + 2-oxoglutarate = (S)-2,3,4,5-tetrahydrodipicolinate + L-glutamate + H2O + H(+). Its pathway is amino-acid biosynthesis; L-lysine biosynthesis via DAP pathway; LL-2,6-diaminopimelate from (S)-tetrahydrodipicolinate (aminotransferase route): step 1/1. Functionally, involved in the synthesis of meso-diaminopimelate (m-DAP or DL-DAP), required for both lysine and peptidoglycan biosynthesis. Catalyzes the direct conversion of tetrahydrodipicolinate to LL-diaminopimelate. The polypeptide is LL-diaminopimelate aminotransferase (Chlamydia felis (strain Fe/C-56) (Chlamydophila felis)).